We begin with the raw amino-acid sequence, 290 residues long: MTTSGGLTGPGAFGRLPQPFHQPGITSFVEFLALQAPDLLPGRLQMPAGGQPPEVPHGTTIVAVAYQGGVVMAGDRRATMGNVIAQRDIEKVFQTDEHSCVGIAGSAGIALEVVRLFQVELEHYEKLQGTTLSLEGKANRLAMMIRANLPMALQGLAVVPLFAGYDLFADDPQRAGRIFSFDVTGGRYEEHSFHAVGSGSTFARGALKKLFRDDFDEPHAVRTCIEALYDAADDDSATGGPDLTRRIYPVVAVVDANGFRRLADDTVGGVVEQVIAARMANPGGPVAVLP.

Positions 1–58 are cleaved as a propeptide — removed in mature form; by autocatalysis; it reads MTTSGGLTGPGAFGRLPQPFHQPGITSFVEFLALQAPDLLPGRLQMPAGGQPPEVPHG. Residue T59 is the Nucleophile of the active site.

It belongs to the peptidase T1B family. In terms of assembly, the 20S proteasome core is composed of 14 alpha and 14 beta subunits that assemble into four stacked heptameric rings, resulting in a barrel-shaped structure. The two inner rings, each composed of seven catalytic beta subunits, are sandwiched by two outer rings, each composed of seven alpha subunits. The catalytic chamber with the active sites is on the inside of the barrel. Has a gated structure, the ends of the cylinder being occluded by the N-termini of the alpha-subunits. Is capped by the proteasome-associated ATPase, ARC.

It is found in the cytoplasm. The enzyme catalyses Cleavage of peptide bonds with very broad specificity.. It participates in protein degradation; proteasomal Pup-dependent pathway. The formation of the proteasomal ATPase ARC-20S proteasome complex, likely via the docking of the C-termini of ARC into the intersubunit pockets in the alpha-rings, may trigger opening of the gate for substrate entry. Interconversion between the open-gate and close-gate conformations leads to a dynamic regulation of the 20S proteasome proteolysis activity. Functionally, component of the proteasome core, a large protease complex with broad specificity involved in protein degradation. The polypeptide is Proteasome subunit beta (Acidothermus cellulolyticus (strain ATCC 43068 / DSM 8971 / 11B)).